Consider the following 157-residue polypeptide: Holo-[acyl-carrier-protein] synthase (157 aa).

Mg(2+) is bound by residues aspartate 8 and glutamate 59.

It belongs to the P-Pant transferase superfamily. AcpS family. It depends on Mg(2+) as a cofactor.

The protein localises to the cytoplasm. It catalyses the reaction apo-[ACP] + CoA = holo-[ACP] + adenosine 3',5'-bisphosphate + H(+). Functionally, transfers the 4'-phosphopantetheine moiety from coenzyme A to a Ser of acyl-carrier-protein. The sequence is that of Holo-[acyl-carrier-protein] synthase from Gluconobacter oxydans (strain 621H) (Gluconobacter suboxydans).